Reading from the N-terminus, the 707-residue chain is Matrix metalloproteinase-9 (707 aa).

The first 19 residues, 1–19 (MSPRQPLVLALLVLGCCSA), serve as a signal peptide directing secretion. A propeptide spans 20-106 (APRRRQPTLV…PRCGVPDVGK (87 aa)) (activation peptide). N-linked (GlcNAc...) asparagine glycosylation is present at asparagine 88. Residues 97–104 (PRCGVPDV) carry the Cysteine switch motif. Cysteine 99 contacts Zn(2+). 2 N-linked (GlcNAc...) asparagine glycosylation sites follow: asparagine 120 and asparagine 127. Residues aspartate 131 and aspartate 165 each contribute to the Ca(2+) site. 2 residues coordinate Zn(2+): histidine 175 and aspartate 177. 4 residues coordinate Ca(2+): aspartate 182, glycine 183, aspartate 185, and leucine 187. Position 190 (histidine 190) interacts with Zn(2+). Ca(2+)-binding residues include glycine 197, glutamine 199, and aspartate 201. Histidine 203 contributes to the Zn(2+) binding site. Positions 205, 206, and 208 each coordinate Ca(2+). 3 consecutive Fibronectin type-II domains span residues 225–273 (ADGA…FCPS), 283–331 (ADGK…FCPT), and 342–390 (SAGE…FCPD). Intrachain disulfides connect cysteine 230–cysteine 256, cysteine 244–cysteine 271, cysteine 288–cysteine 314, cysteine 302–cysteine 329, cysteine 347–cysteine 373, and cysteine 361–cysteine 388. Position 401 (histidine 401) interacts with Zn(2+). The active site involves glutamate 402. Histidine 405 and histidine 411 together coordinate Zn(2+). A disordered region spans residues 437–508 (RGIQHLYGPN…ASPSAAPTAS (72 aa)). Residues 446–467 (NPNPQPPATTTPEPQPTAPPTA) show a composition bias toward pro residues. The span at 481-493 (PTTSPTGAPSAGP) shows a compositional bias: low complexity. An intrachain disulfide couples cysteine 516 to cysteine 704. 4 Hemopexin repeats span residues 518-563 (VNVF…WPAL), 564-608 (PAKL…GLGP), 610-657 (VPHV…FPGV), and 658-704 (PLNT…ILHC).

It belongs to the peptidase M10A family. As to quaternary structure, exists as monomer or homodimer; disulfide-linked. Also exists as heterodimer with LCN2. Macrophages and transformed cell lines produce only the monomeric form. Interacts with ECM1. The cofactor is Zn(2+). Requires Ca(2+) as cofactor. Post-translationally, N- and O-glycosylated. Osteoclasts.

It localises to the secreted. The protein resides in the extracellular space. The protein localises to the extracellular matrix. The enzyme catalyses Cleavage of gelatin types I and V and collagen types IV and V.. Functionally, matrix metalloproteinase that plays an essential role in local proteolysis of the extracellular matrix and in leukocyte migration. Could play a role in bone osteoclastic resorption. Cleaves KiSS1 at a Gly-|-Leu bond. Cleaves NINJ1 to generate the Secreted ninjurin-1 form. Cleaves type IV and type V collagen into large C-terminal three quarter fragments and shorter N-terminal one quarter fragments. Degrades fibronectin but not laminin or Pz-peptide. The protein is Matrix metalloproteinase-9 of Oryctolagus cuniculus (Rabbit).